The chain runs to 451 residues: tRNA modification GTPase MnmE (451 aa).

Arg-23, Glu-80, and Lys-119 together coordinate (6S)-5-formyl-5,6,7,8-tetrahydrofolate. Positions 215-372 (GIKVVLTGQP…LRTVLLKTVG (158 aa)) constitute a TrmE-type G domain. Asn-225 contacts K(+). GTP is bound by residues 225–230 (NVGKSS), 244–250 (TEIPGTT), and 269–272 (DTAG). Ser-229 provides a ligand contact to Mg(2+). The K(+) site is built by Thr-244, Ile-246, and Thr-249. Thr-250 serves as a coordination point for Mg(2+). Lys-451 contributes to the (6S)-5-formyl-5,6,7,8-tetrahydrofolate binding site.

It belongs to the TRAFAC class TrmE-Era-EngA-EngB-Septin-like GTPase superfamily. TrmE GTPase family. In terms of assembly, homodimer. Heterotetramer of two MnmE and two MnmG subunits. It depends on K(+) as a cofactor.

The protein resides in the cytoplasm. Functionally, exhibits a very high intrinsic GTPase hydrolysis rate. Involved in the addition of a carboxymethylaminomethyl (cmnm) group at the wobble position (U34) of certain tRNAs, forming tRNA-cmnm(5)s(2)U34. The protein is tRNA modification GTPase MnmE of Nitrosomonas eutropha (strain DSM 101675 / C91 / Nm57).